The following is a 75-amino-acid chain: Salivary glue protein Sgs-8 (75 aa).

An N-terminal signal peptide occupies residues 1–24 (MKLLVVAVIACIMLIGFADPASGC).

The protein is Salivary glue protein Sgs-8 (Sgs8) of Drosophila melanogaster (Fruit fly).